The following is a 378-amino-acid chain: Probable pectin lyase A (378 aa).

The N-terminal stretch at 1–19 is a signal peptide; sequence MKFPAFITAIISIASLSSA. 2 disulfides stabilise this stretch: C82-C101 and C91-C225. R255 is a catalytic residue. A disulfide bond links C321 and C329.

This sequence belongs to the polysaccharide lyase 1 family.

It localises to the secreted. It carries out the reaction Eliminative cleavage of (1-&gt;4)-alpha-D-galacturonan methyl ester to give oligosaccharides with 4-deoxy-6-O-methyl-alpha-D-galact-4-enuronosyl groups at their non-reducing ends.. Functionally, pectinolytic enzymes consist of four classes of enzymes: pectin lyase, polygalacturonase, pectin methylesterase and rhamnogalacturonase. Among pectinolytic enzymes, pectin lyase is the most important in depolymerization of pectin, since it cleaves internal glycosidic bonds of highly methylated pectins. In Aspergillus terreus (strain NIH 2624 / FGSC A1156), this protein is Probable pectin lyase A (pelA).